We begin with the raw amino-acid sequence, 366 residues long: GTPase Obg (366 aa).

One can recognise an Obg domain in the interval 1-159 (MKFLDEAKVY…KTIWLRLKLI (159 aa)). An OBG-type G domain is found at 160–327 (ADAGLVGLPN…VLRALRDVIV (168 aa)). GTP-binding positions include 166–173 (GLPNAGKS), 191–195 (FTTLH), 212–215 (DIPG), 279–282 (SQID), and 308–310 (SAI). Mg(2+) is bound by residues serine 173 and threonine 193. The interval 333 to 366 (DDETISQRPKKHRHKLEDRPQHENGPEESEEGEE) is disordered. Residues 347 to 357 (KLEDRPQHENG) show a composition bias toward basic and acidic residues.

This sequence belongs to the TRAFAC class OBG-HflX-like GTPase superfamily. OBG GTPase family. As to quaternary structure, monomer. The cofactor is Mg(2+).

Its subcellular location is the cytoplasm. In terms of biological role, an essential GTPase which binds GTP, GDP and possibly (p)ppGpp with moderate affinity, with high nucleotide exchange rates and a fairly low GTP hydrolysis rate. Plays a role in control of the cell cycle, stress response, ribosome biogenesis and in those bacteria that undergo differentiation, in morphogenesis control. This chain is GTPase Obg, found in Allorhizobium ampelinum (strain ATCC BAA-846 / DSM 112012 / S4) (Agrobacterium vitis (strain S4)).